Here is a 430-residue protein sequence, read N- to C-terminus: UDP-N-acetylglucosamine 1-carboxyvinyltransferase 1 (430 aa).

22-23 provides a ligand contact to phosphoenolpyruvate; it reads KN. Arg-93 is a UDP-N-acetyl-alpha-D-glucosamine binding site. Cys-117 serves as the catalytic Proton donor. The residue at position 117 (Cys-117) is a 2-(S-cysteinyl)pyruvic acid O-phosphothioketal. UDP-N-acetyl-alpha-D-glucosamine is bound by residues 122 to 126, Asp-305, and Val-327; that span reads RPVDL.

Belongs to the EPSP synthase family. MurA subfamily.

The protein localises to the cytoplasm. It carries out the reaction phosphoenolpyruvate + UDP-N-acetyl-alpha-D-glucosamine = UDP-N-acetyl-3-O-(1-carboxyvinyl)-alpha-D-glucosamine + phosphate. Its pathway is cell wall biogenesis; peptidoglycan biosynthesis. In terms of biological role, cell wall formation. Adds enolpyruvyl to UDP-N-acetylglucosamine. This Listeria monocytogenes serotype 4b (strain F2365) protein is UDP-N-acetylglucosamine 1-carboxyvinyltransferase 1.